We begin with the raw amino-acid sequence, 234 residues long: Small ribosomal subunit protein uS2 (234 aa).

It belongs to the universal ribosomal protein uS2 family.

The chain is Small ribosomal subunit protein uS2 from Clostridium kluyveri (strain NBRC 12016).